A 515-amino-acid chain; its full sequence is Protein translocase subunit SecD (515 aa).

The next 6 membrane-spanning stretches (helical) occupy residues 5-25 (LIAK…LATP), 353-373 (KGIL…VAYY), 375-395 (LSGL…MGLL), 398-418 (FGAT…GIAV), 450-470 (FSTI…LFQF), and 477-497 (GFAV…ILCT).

It belongs to the SecD/SecF family. SecD subfamily. In terms of assembly, forms a complex with SecF. Part of the essential Sec protein translocation apparatus which comprises SecA, SecYEG and auxiliary proteins SecDF. Other proteins may also be involved.

It is found in the cell inner membrane. In terms of biological role, part of the Sec protein translocase complex. Interacts with the SecYEG preprotein conducting channel. SecDF uses the proton motive force (PMF) to complete protein translocation after the ATP-dependent function of SecA. The chain is Protein translocase subunit SecD from Desulfurispirillum indicum (strain ATCC BAA-1389 / DSM 22839 / S5).